Consider the following 202-residue polypeptide: uncharacterized protein (202 aa).

The chain crosses the membrane as a helical span at residues 10-30; that stretch reads TAAIFLLCCTSVIILFTIAVV.

This sequence belongs to the bacterial sugar transferase family.

The protein localises to the cell membrane. In terms of biological role, may be involved in the production of the exopolysaccharide (EPS) component of the extracellular matrix during biofilm formation. EPS is responsible for the adhesion of chains of cells into bundles. This is an uncharacterized protein from Bacillus subtilis (strain 168).